The primary structure comprises 470 residues: Siroheme synthase (470 aa).

The segment at 1–201 (MDYFPIFCQL…NDHVQADQHV (201 aa)) is precorrin-2 dehydrogenase /sirohydrochlorin ferrochelatase. NAD(+) contacts are provided by residues 22–23 (EI) and 43–44 (CE). Serine 128 is subject to Phosphoserine. The interval 213 to 470 (GEVVLVGAGP…KVTECVAHVG (258 aa)) is uroporphyrinogen-III C-methyltransferase. Residue proline 222 coordinates S-adenosyl-L-methionine. Residue aspartate 245 is the Proton acceptor of the active site. Lysine 267 acts as the Proton donor in catalysis. Residues 298-300 (GGD), isoleucine 303, 328-329 (TA), methionine 379, and glycine 408 contribute to the S-adenosyl-L-methionine site.

In the N-terminal section; belongs to the precorrin-2 dehydrogenase / sirohydrochlorin ferrochelatase family. The protein in the C-terminal section; belongs to the precorrin methyltransferase family.

It carries out the reaction uroporphyrinogen III + 2 S-adenosyl-L-methionine = precorrin-2 + 2 S-adenosyl-L-homocysteine + H(+). The catalysed reaction is precorrin-2 + NAD(+) = sirohydrochlorin + NADH + 2 H(+). The enzyme catalyses siroheme + 2 H(+) = sirohydrochlorin + Fe(2+). It participates in cofactor biosynthesis; adenosylcobalamin biosynthesis; precorrin-2 from uroporphyrinogen III: step 1/1. The protein operates within cofactor biosynthesis; adenosylcobalamin biosynthesis; sirohydrochlorin from precorrin-2: step 1/1. It functions in the pathway porphyrin-containing compound metabolism; siroheme biosynthesis; precorrin-2 from uroporphyrinogen III: step 1/1. Its pathway is porphyrin-containing compound metabolism; siroheme biosynthesis; siroheme from sirohydrochlorin: step 1/1. It participates in porphyrin-containing compound metabolism; siroheme biosynthesis; sirohydrochlorin from precorrin-2: step 1/1. In terms of biological role, multifunctional enzyme that catalyzes the SAM-dependent methylations of uroporphyrinogen III at position C-2 and C-7 to form precorrin-2 via precorrin-1. Then it catalyzes the NAD-dependent ring dehydrogenation of precorrin-2 to yield sirohydrochlorin. Finally, it catalyzes the ferrochelation of sirohydrochlorin to yield siroheme. The polypeptide is Siroheme synthase (Yersinia pestis).